Here is a 328-residue protein sequence, read N- to C-terminus: L-lactate dehydrogenase (328 aa).

NAD(+) is bound by residues V18, E39, K46, Y71, and 85 to 86 (GA). Q88 and R94 together coordinate substrate. NAD(+) is bound by residues S107, 124 to 126 (AAN), and S149. 126–129 (NPVD) is a substrate binding site. Residue 154–157 (DSAR) participates in substrate binding. Beta-D-fructose 1,6-bisphosphate-binding residues include R159 and H174. Residue H181 is the Proton acceptor of the active site. Residue Y226 is modified to Phosphotyrosine. Residue T235 coordinates substrate.

Belongs to the LDH/MDH superfamily. LDH family. Homotetramer.

Its subcellular location is the cytoplasm. It catalyses the reaction (S)-lactate + NAD(+) = pyruvate + NADH + H(+). Its pathway is fermentation; pyruvate fermentation to lactate; (S)-lactate from pyruvate: step 1/1. Its activity is regulated as follows. Allosterically activated by fructose 1,6-bisphosphate (FBP). In terms of biological role, catalyzes the conversion of lactate to pyruvate. The chain is L-lactate dehydrogenase from Streptococcus gordonii (strain Challis / ATCC 35105 / BCRC 15272 / CH1 / DL1 / V288).